Reading from the N-terminus, the 311-residue chain is MEDLYSIHPGISRGGGGGGGGAASEASGVAGGGSSPPHPPPPATTAAAADLTELMKAQIAGHPSYPSLLSAYIECRKVGAPPEVTTLLEEIGREGRGGGGGATAGGEIGLDPELDEFMETYCRVLERYKEELTRPFDEAASFLTGIHTQLASLCGGAPPPTDNSDEMVGSSEDEPCSGDADAADFGQEHSSRLADHELKEMLLKKYSGCLSRLRSEFLKKRKKGKLPKDARSALMDWWNTHYRWPYPTEEDKVRLAAMTGLDPKQINNWFINQRKRHWKPSEDMRFALMEGVTGGSSSGTTLYFDTGTIGP.

2 disordered regions span residues 1–45 (MEDL…PATT) and 153–184 (LCGG…DAAD). Positions 12-22 (SRGGGGGGGGA) are enriched in gly residues. Residues 197–217 (ELKEMLLKKYSGCLSRLRSEF) form the ELK domain. A DNA-binding region (homeobox; TALE-type) is located at residues 218-281 (LKKRKKGKLP…NQRKRHWKPS (64 aa)).

It belongs to the TALE/KNOX homeobox family.

The protein resides in the nucleus. In terms of biological role, probable transcription factor that may be involved in shoot formation during embryogenesis. This chain is Homeobox protein knotted-1-like 10 (OSH71), found in Oryza sativa subsp. indica (Rice).